We begin with the raw amino-acid sequence, 452 residues long: Tripartite motif-containing protein 49D (452 aa).

The segment at 15-56 (CPICLNYFIDPVTIDCGHSFCRPCFYLNWQDIPILTQCFECL) adopts an RING-type zinc-finger fold. The B box-type zinc-finger motif lies at 88 to 129 (SEEQMCGTHRETKKIFCEVDRSLLCLLCSSSLEHRYHRHCPA). Cysteine 93, histidine 96, cysteine 115, and histidine 121 together coordinate Zn(2+). Residues 269–452 (ELRAGPITGL…LRPIFCCVHL (184 aa)) enclose the B30.2/SPRY domain.

This sequence belongs to the TRIM/RBCC family.

In Homo sapiens (Human), this protein is Tripartite motif-containing protein 49D.